The chain runs to 228 residues: MSSTTPAPQTVYQWTADVAVRFLKEWNFLLGIILLFITIILQFGYTSRSMFIYVVKMIILWLMWPLTIVLCIFNCVYALNNVYLGFSIVFTIVSIVMWIMYFVNSIRLFIRTGSWWSFNPETNNLMCIDVKGTVYVRPIIEDYHTLTATNVRGHLYMQGVKLGTGFSLSDLPAYVTVAKVSHLCTYKRAFLDKVDGVSGFAVYVKSKVGNYRLPSNKPSGADTALLRI.

At 2 to 25 the chain is on the virion surface side; that stretch reads SSTTPAPQTVYQWTADVAVRFLKE. Residues 26–46 traverse the membrane as a helical segment; it reads WNFLLGIILLFITIILQFGYT. Topologically, residues 47–56 are intravirion; it reads SRSMFIYVVK. Residues 57–77 form a helical membrane-spanning segment; sequence MIILWLMWPLTIVLCIFNCVY. At 78–85 the chain is on the virion surface side; the sequence is ALNNVYLG. The chain crosses the membrane as a helical span at residues 86–106; it reads FSIVFTIVSIVMWIMYFVNSI. The Intravirion segment spans residues 107–228; sequence RLFIRTGSWW…SGADTALLRI (122 aa).

This sequence belongs to the betacoronaviruses M protein family. As to quaternary structure, homomultimer. Interacts with envelope E protein in the budding compartment of the host cell, which is located between endoplasmic reticulum and the Golgi complex. Forms a complex with HE and S proteins. Interacts with nucleocapsid N protein. This interaction probably participates in RNA packaging into the virus.

It localises to the virion membrane. The protein localises to the host Golgi apparatus membrane. Its function is as follows. Component of the viral envelope that plays a central role in virus morphogenesis and assembly via its interactions with other viral proteins. This is Membrane protein from Rat coronavirus (strain 681) (RCV-SDAV).